Consider the following 334-residue polypeptide: S-adenosylmethionine:tRNA ribosyltransferase-isomerase (334 aa).

This sequence belongs to the QueA family. As to quaternary structure, monomer.

The protein localises to the cytoplasm. The enzyme catalyses 7-aminomethyl-7-carbaguanosine(34) in tRNA + S-adenosyl-L-methionine = epoxyqueuosine(34) in tRNA + adenine + L-methionine + 2 H(+). It participates in tRNA modification; tRNA-queuosine biosynthesis. In terms of biological role, transfers and isomerizes the ribose moiety from AdoMet to the 7-aminomethyl group of 7-deazaguanine (preQ1-tRNA) to give epoxyqueuosine (oQ-tRNA). The sequence is that of S-adenosylmethionine:tRNA ribosyltransferase-isomerase from Aquifex aeolicus (strain VF5).